The following is a 24-amino-acid chain: MALNLQDKQAIVAEVSEVAKGALS.

This sequence belongs to the universal ribosomal protein uL10 family. Part of the ribosomal stalk of the 50S ribosomal subunit. The N-terminus interacts with L11 and the large rRNA to form the base of the stalk. The C-terminus forms an elongated spine to which L12 dimers bind in a sequential fashion forming a multimeric L10(L12)X complex.

Functionally, forms part of the ribosomal stalk, playing a central role in the interaction of the ribosome with GTP-bound translation factors. The protein is Large ribosomal subunit protein uL10 (rplJ) of Enterobacter cloacae.